We begin with the raw amino-acid sequence, 304 residues long: Beta-lactamase-like protein str6 (304 aa).

The protein belongs to the beta-lactamase family.

Its pathway is mycotoxin biosynthesis. Beta-lactamase-like protein; part of the gene cluster that mediates the biosynthesis of strobilurin A, an antifungal polyketide that contains a key beta-methoxyacrylate toxophore that targets the complex III of the mitochondrial electron transport chain. Strobilurin biosynthesis begins with construction of benzoyl CoA by step-wise elimination of ammonia from phenylalanine by the phenylalanine ammonia-lyase str11, oxygenation by str8 and retro-Claisen reaction to form benzoic acid, which is activated to its CoA thiolester benzoyl CoA by the dedicated CoA ligase str10. Benzoyl CoA forms the starter unit for the highly reducing polyketide synthase stpks1 that produces the polyketide prestrobilutin A. The FAD-dependent oxygenase str9 then catalyzes the key oxidative rearrangement responsible for the creation of the beta-methoxyacrylate toxophore. Str9 performs epoxidation of the 2,3 olefin of prestrobilutin A, followed by Meinwald rearrangement to furnish the aldehyde intermediate. Rapid enolization of the aldehyde intermediate would give the beta-methoxyacrylate skeleton and methylations catalyzed by str2 and str3 complete the synthesis and lead to the production of strobilurin A. The short-chain dehydrogenase stl2 and the dehydrogenase str4 play a role in the shunt pathway leading to the production of bolineol. The cluster encodes no obvious halogenase gene that could be involved in production of strobilurin B, nor any obvious dimethylallyl-transferase that could be involved in the production of strobilurin G. It is possible that unknown proteins encoded in, or near, the cluster (such as str1 or stl1) may form new classes of halogenases or dimethylally-transferases, or that the responsible genes are located elsewhere on the genome. Similarly, proteins encoded by str5/str6 hydrolases appear to have no chemical role in the biosynthesis of strobilurin A. Finally, no obvious self-resistance gene is found within the cluster. In Strobilurus tenacellus, this protein is Beta-lactamase-like protein str6.